The chain runs to 389 residues: COP9 signalosome complex subunit 11 (389 aa).

One can recognise a PCI domain in the interval 143–312; it reads QLIIDIPNLV…ILYQKFDPQM (170 aa).

In terms of assembly, component of a COP9 signalosome-like (CSN) complex.

It is found in the cytoplasm. Its subcellular location is the nucleus. Its function is as follows. Component of the COP9 signalosome (CSN) complex that acts as an regulator of the ubiquitin (Ubl) conjugation pathway by mediating the deneddylation of the cullin subunit of SCF-type E3 ubiquitin-protein ligase complexes The CSN complex is involved in the regulation of the mating pheromone response. PCI8 may also be involved in transcriptional and translational control. The polypeptide is COP9 signalosome complex subunit 11 (PCI8) (Kluyveromyces lactis (strain ATCC 8585 / CBS 2359 / DSM 70799 / NBRC 1267 / NRRL Y-1140 / WM37) (Yeast)).